Reading from the N-terminus, the 338-residue chain is Holliday junction branch migration complex subunit RuvB (338 aa).

Residues 1–181 (MEERILTQNF…FGVINRLDYY (181 aa)) form a large ATPase domain (RuvB-L) region. Residues Leu-20, Arg-21, Gly-62, Lys-65, Thr-66, Thr-67, 128 to 130 (EDF), Arg-171, Tyr-181, and Arg-218 each bind ATP. Residue Thr-66 coordinates Mg(2+). Residues 182-252 (SVEELKEIIK…TANIALNMLG (71 aa)) are small ATPAse domain (RuvB-S). Residues 255–338 (EMGLEEIDRK…YVEQRRIEDV (84 aa)) form a head domain (RuvB-H) region. DNA contacts are provided by Arg-310 and Arg-315.

The protein belongs to the RuvB family. As to quaternary structure, homohexamer. Forms an RuvA(8)-RuvB(12)-Holliday junction (HJ) complex. HJ DNA is sandwiched between 2 RuvA tetramers; dsDNA enters through RuvA and exits via RuvB. An RuvB hexamer assembles on each DNA strand where it exits the tetramer. Each RuvB hexamer is contacted by two RuvA subunits (via domain III) on 2 adjacent RuvB subunits; this complex drives branch migration. In the full resolvosome a probable DNA-RuvA(4)-RuvB(12)-RuvC(2) complex forms which resolves the HJ.

Its subcellular location is the cytoplasm. The enzyme catalyses ATP + H2O = ADP + phosphate + H(+). In terms of biological role, the RuvA-RuvB-RuvC complex processes Holliday junction (HJ) DNA during genetic recombination and DNA repair, while the RuvA-RuvB complex plays an important role in the rescue of blocked DNA replication forks via replication fork reversal (RFR). RuvA specifically binds to HJ cruciform DNA, conferring on it an open structure. The RuvB hexamer acts as an ATP-dependent pump, pulling dsDNA into and through the RuvAB complex. RuvB forms 2 homohexamers on either side of HJ DNA bound by 1 or 2 RuvA tetramers; 4 subunits per hexamer contact DNA at a time. Coordinated motions by a converter formed by DNA-disengaged RuvB subunits stimulates ATP hydrolysis and nucleotide exchange. Immobilization of the converter enables RuvB to convert the ATP-contained energy into a lever motion, pulling 2 nucleotides of DNA out of the RuvA tetramer per ATP hydrolyzed, thus driving DNA branch migration. The RuvB motors rotate together with the DNA substrate, which together with the progressing nucleotide cycle form the mechanistic basis for DNA recombination by continuous HJ branch migration. Branch migration allows RuvC to scan DNA until it finds its consensus sequence, where it cleaves and resolves cruciform DNA. In Caldanaerobacter subterraneus subsp. tengcongensis (strain DSM 15242 / JCM 11007 / NBRC 100824 / MB4) (Thermoanaerobacter tengcongensis), this protein is Holliday junction branch migration complex subunit RuvB.